The following is a 231-amino-acid chain: PX domain-containing protein 1 (231 aa).

The PX domain maps to 1–134 (MASAVFEGTS…TFFERSPLDQ (134 aa)).

The chain is PX domain-containing protein 1 (PXDC1) from Bos taurus (Bovine).